A 392-amino-acid chain; its full sequence is Outer membrane protein assembly factor BamB (392 aa).

The first 19 residues, 1–19 (MQLRKLLLPGLLSVTLLSG), serve as a signal peptide directing secretion. A lipid anchor (N-palmitoyl cysteine) is attached at cysteine 20. The S-diacylglycerol cysteine moiety is linked to residue cysteine 20.

The protein belongs to the BamB family. As to quaternary structure, part of the Bam complex, which is composed of the outer membrane protein BamA, and four lipoproteins BamB, BamC, BamD and BamE. Monomer. Interacts directly with BamA. The Bam complex has the shape of a hat, with the BamA beta-barrel crown in the outer membrane and the periplasmic brim formed by the BamA POTRA domains and the 4 lipoproteins.

Its subcellular location is the cell outer membrane. Part of the outer membrane protein assembly complex (Bam), which is involved in assembly and insertion of beta-barrel proteins into the outer membrane. Nonessential member of the complex, which may orient the flexible periplasmic domain of BamA for interaction with other Bam components, chaperones and nascent outer membrane proteins. Efficient substrate folding and insertion into the outer membrane requires all 5 subunits. A lateral gate may open between the first and last strands of the BamA beta-barrel that allows substrate to insert into the outer membrane; comparison of the structures of complete and nearly complete Bam complexes show there is considerable movement of all 5 proteins. In Escherichia coli (strain K12), this protein is Outer membrane protein assembly factor BamB.